A 530-amino-acid chain; its full sequence is MMSIWDALREKQAQVSDRSILSLFDDPGRAQEYSAKTGDLFFDFSKTNIDDEALNLLSGLLDASGMAQKRTAMFSGQPINDTEGRAVLHTALRNLDGGPVLVNGTDVMPGVLATLERMRVFAQGVRDSDVTDVVNIGIGGSDLGPAMAVAALSPYHDGPRCHFVSNVDGAHIADTLRGLDAKKTLVIVASKTFTTIETMTNARTARAWMTEHGGDPKAQFAALSTADDLTAAFGIPPERVFGFEDWVGGRYSVWGPIGLSLMIAIGPRAFDAFLRGGQAMDRHFQAADWRENLPVLLALVGVWHAQVCGCSSRAVLPYDQRLAKLPDYLQQLEMESNGKSVQIGGADVTVDSGPIVWGAAGTNGQHAFYQLIHQGTRVVPCEFLVAAEGHEPELAHHHNLLVANCLAQSEALMRGRSIEDARAKMVQAGFTGQELERQARHRVFAGNRPSVTLAYPKLDPFMLGQIIALYEHRVFVEGVILGINSYDQWGVELGKELATSLQPIVDGEAPADGKDGSTAQLVGYVIANRG.

The Proton donor role is filled by Glu335. Active-site residues include His366 and Lys495.

The protein belongs to the GPI family.

It localises to the cytoplasm. The enzyme catalyses alpha-D-glucose 6-phosphate = beta-D-fructose 6-phosphate. It functions in the pathway carbohydrate biosynthesis; gluconeogenesis. It participates in carbohydrate degradation; glycolysis; D-glyceraldehyde 3-phosphate and glycerone phosphate from D-glucose: step 2/4. Its function is as follows. Catalyzes the reversible isomerization of glucose-6-phosphate to fructose-6-phosphate. In Roseobacter denitrificans (strain ATCC 33942 / OCh 114) (Erythrobacter sp. (strain OCh 114)), this protein is Glucose-6-phosphate isomerase.